The sequence spans 483 residues: Wax ester synthase/diacylglycerol acyltransferase 10 (483 aa).

Residues 1 to 203 (MTKEEVEEEP…SINAVYYAVR (203 aa)) are Cytoplasmic-facing. Residue histidine 143 is the Proton acceptor of the active site. A helical transmembrane segment spans residues 204 to 222 (LIWNTIVDLLLLWATSLFF). Topologically, residues 223–483 (KDTETPISEG…MKDTLSGKSD (261 aa)) are lumenal. Asparagine 394 and asparagine 399 each carry an N-linked (GlcNAc...) asparagine glycan.

The protein in the N-terminal section; belongs to the long-chain O-acyltransferase family. In terms of tissue distribution, mostly expressed in roots.

The protein localises to the cell membrane. The protein resides in the endoplasmic reticulum membrane. The enzyme catalyses an acyl-CoA + a 1,2-diacyl-sn-glycerol = a triacyl-sn-glycerol + CoA. It carries out the reaction a long chain fatty alcohol + a fatty acyl-CoA = a wax ester + CoA. Its pathway is glycerolipid metabolism; triacylglycerol biosynthesis. The protein operates within lipid metabolism. Functionally, bifunctional wax ester synthase/diacylglycerol acyltransferase. Involved in cuticular wax biosynthesis. The protein is Wax ester synthase/diacylglycerol acyltransferase 10 of Arabidopsis thaliana (Mouse-ear cress).